Consider the following 513-residue polypeptide: Solute carrier family 2, facilitated glucose transporter member 7 (513 aa).

Residues 1-21 (MEDKEIGTPLPLPHSEARLQP) are Cytoplasmic-facing. Residues 22–42 (TLVLTTLSAAFGSVFQYGYNI) traverse the membrane as a helical segment. Residues 43-78 (AVINTPHKVFKSFYNDTHFERHGTFMDESTLLLLWS) are Extracellular-facing. A glycan (N-linked (GlcNAc...) asparagine) is linked at Asn57. The helical transmembrane segment at 79 to 99 (CTVSMFPLGGLLGSLVVGLMV) threads the bilayer. Residues 100–107 (NKWGRKGT) lie on the Cytoplasmic side of the membrane. The chain crosses the membrane as a helical span at residues 108–128 (LLINNVFAITSAVLMGVSKVA). Residues 129–138 (RAFELIILSR) are Extracellular-facing. Residues 139 to 159 (VLVGICAGIAYSTLPMYLGEL) traverse the membrane as a helical segment. Residues 160–172 (APQNLRGALGTMT) are Cytoplasmic-facing. Residues 173–193 (EVFVIIGVLLAQIFSLQAILG) traverse the membrane as a helical segment. Residues 194–198 (NATGW) lie on the Extracellular side of the membrane. A helical transmembrane segment spans residues 199–219 (PILLALTGVPAVIQLLSLPFF). At 220–282 (PESPRYTLIE…LNLFTFRPLR (63 aa)) the chain is on the cytoplasmic side. The chain crosses the membrane as a helical span at residues 283–303 (WQLISIVVLMAGQQLSGINAV). D-glucose contacts are provided by residues 295 to 296 (QQ) and Asn301. Over 304–322 (NYYADVIYTSAGVDPTQSQ) the chain is Extracellular. A helical membrane pass occupies residues 323–343 (YVTLGSGVINLVMTLVSAVII). Asn332 serves as a coordination point for D-glucose. The Cytoplasmic portion of the chain corresponds to 344–351 (ERLGRRIL). A helical transmembrane segment spans residues 352–372 (LLSGYAICCSACLVLTVALLL). Topologically, residues 373–380 (QSTAPELS) are extracellular. A helical transmembrane segment spans residues 381–401 (YLSIVCVFSYIVGHSIGPSPV). Over 402–416 (PSVVRTEIVLQSSRT) the chain is Cytoplasmic. Residues 417–437 (AAFTVDGAVHWLTNFIVGLTF) form a helical membrane-spanning segment. The Extracellular portion of the chain corresponds to 438–446 (PSIQVAIGA). Residues 447–467 (YSFLVFAGVCILTAAYIYVVI) form a helical membrane-spanning segment. Over 468-513 (PETKGRTFVEINCAFAKRNGVEFPEEKEVATAKPHTPSLPTKETAF) the chain is Cytoplasmic. Positions 494–513 (KEVATAKPHTPSLPTKETAF) are disordered.

It belongs to the major facilitator superfamily. Sugar transporter (TC 2.A.1.1) family. Glucose transporter subfamily.

It is found in the cell membrane. Its subcellular location is the apical cell membrane. The enzyme catalyses D-glucose(out) = D-glucose(in). The catalysed reaction is D-fructose(out) = D-fructose(in). In terms of biological role, probable sugar transporter. Even if its physiological substrate is subject to discussion, it is able to transport glucose and fructose. Does not transport galactose, 2-deoxy-d-glucose and xylose. The polypeptide is Solute carrier family 2, facilitated glucose transporter member 7 (Mus musculus (Mouse)).